A 756-amino-acid chain; its full sequence is ATP-dependent zinc metalloprotease FtsH (756 aa).

Residues 1 to 44 (MGVPAGMPHPNGLQPQRKDKALAQNPNTPQKGSEAFLKKLIHSS) are Cytoplasmic-facing. The helical transmembrane segment at 45 to 65 (WFFPGAAIVVMLGFLMASFFT) threads the bilayer. At 66 to 148 (QPSRQVDTNV…SYTDQPVEHS (83 aa)) the chain is on the extracellular side. Residues 149–169 (FLGSLVSLLLPILLFGVLFWF) form a helical membrane-spanning segment. The Cytoplasmic portion of the chain corresponds to 170–756 (LMGRVGGGSS…NQNGAENERG (587 aa)). An ATP-binding site is contributed by 241-248 (GPPGTGKT). His463 is a Zn(2+) binding site. Residue Glu464 is part of the active site. Residues His467 and Asp539 each coordinate Zn(2+). 2 stretches are compositionally biased toward basic and acidic residues: residues 647 to 662 (PERE…ERTD) and 672 to 681 (LAKEAEKSEE). The segment at 647 to 756 (PEREHWYSKP…NQNGAENERG (110 aa)) is disordered. 2 stretches are compositionally biased toward low complexity: residues 684–703 (AEAP…VPVA) and 713–724 (PLTDPDADPTVA). The segment covering 744–756 (GTPNQNGAENERG) has biased composition (polar residues).

In the central section; belongs to the AAA ATPase family. This sequence in the C-terminal section; belongs to the peptidase M41 family. As to quaternary structure, homohexamer. Zn(2+) is required as a cofactor.

The protein localises to the cell membrane. In terms of biological role, acts as a processive, ATP-dependent zinc metallopeptidase for both cytoplasmic and membrane proteins. Plays a role in the quality control of integral membrane proteins. The sequence is that of ATP-dependent zinc metalloprotease FtsH from Rothia mucilaginosa (strain DY-18) (Stomatococcus mucilaginosus).